The sequence spans 30 residues: LIM and SH3 domain protein 1 (30 aa).

The residue at position 1 (methionine 1) is an N-acetylmethionine. One can recognise an LIM zinc-binding domain in the interval 5 to 30; the sequence is CARCGKIVYPTEKVNCLDKFWHKACF.

Interacts with F-actin. Interacts with ANKRD54. Interacts with KBTBD10. In terms of processing, phosphorylated.

Its subcellular location is the cytoplasm. It localises to the cell cortex. The protein localises to the cytoskeleton. Its function is as follows. Plays an important role in the regulation of dynamic actin-based, cytoskeletal activities. Agonist-dependent changes in LASP1 phosphorylation may also serve to regulate actin-associated ion transport activities, not only in the parietal cell but also in certain other F-actin-rich secretory epithelial cell types. The chain is LIM and SH3 domain protein 1 (LASP1) from Sus scrofa (Pig).